A 424-amino-acid polypeptide reads, in one-letter code: Histidine--tRNA ligase (424 aa).

This sequence belongs to the class-II aminoacyl-tRNA synthetase family. In terms of assembly, homodimer.

Its subcellular location is the cytoplasm. The catalysed reaction is tRNA(His) + L-histidine + ATP = L-histidyl-tRNA(His) + AMP + diphosphate + H(+). The protein is Histidine--tRNA ligase of Shewanella woodyi (strain ATCC 51908 / MS32).